Here is a 293-residue protein sequence, read N- to C-terminus: Autophagy-related protein 36 (293 aa).

Polar residues-rich tracts occupy residues 98–108 (ISSDSNKNSPP) and 260–273 (GETLNRSPSAASSS). Disordered regions lie at residues 98 to 121 (ISSDSNKNSPPSEQPAPALRNIRS) and 250 to 273 (SRSRFTDESTGETLNRSPSAASSS).

As to quaternary structure, interacts with PEX3, ATG8 and ATG11.

It is found in the peroxisome. Functionally, required for autophagic breakdown of peroxisomes, called pexophagy, through linking peroxisomes to the autophagy apparatus. Involved in regulation of the glyoxylate cycle. The polypeptide is Autophagy-related protein 36 (ATG36) (Saccharomyces cerevisiae (strain ATCC 204508 / S288c) (Baker's yeast)).